We begin with the raw amino-acid sequence, 699 residues long: Homeobox-leucine zipper protein HDG8 (699 aa).

The disordered stretch occupies residues 1–31; the sequence is MDNNGGGSSGNEQYTSGDAKQNGKRTCHRHT. Over residues 10–19 the composition is skewed to polar residues; the sequence is GNEQYTSGDA. Positions 22-31 are enriched in basic residues; it reads NGKRTCHRHT. A DNA-binding region (homeobox) is located at residues 23–82; sequence GKRTCHRHTPQQIQRLEAYFKECPHPDERQRNQLCRELKLEPDQIKFWFQNKRTQSKTQE. A coiled-coil region spans residues 89–149; that stretch reads LLRGENETLQ…LKDHRDRISN (61 aa). Positions 204-438 constitute an START domain; sequence AETDMSLLSE…LERMCERMAL (235 aa).

The protein belongs to the HD-ZIP homeobox family. Class IV subfamily. As to quaternary structure, interacts with ANT. Expressed in the embryo at early stage and in the endosperm.

Its subcellular location is the nucleus. Functionally, probable transcription factor. This is Homeobox-leucine zipper protein HDG8 from Arabidopsis thaliana (Mouse-ear cress).